The primary structure comprises 110 residues: Ribonuclease P protein component (110 aa).

This sequence belongs to the RnpA family. Consists of a catalytic RNA component (M1 or rnpB) and a protein subunit.

It carries out the reaction Endonucleolytic cleavage of RNA, removing 5'-extranucleotides from tRNA precursor.. In terms of biological role, RNaseP catalyzes the removal of the 5'-leader sequence from pre-tRNA to produce the mature 5'-terminus. It can also cleave other RNA substrates such as 4.5S RNA. The protein component plays an auxiliary but essential role in vivo by binding to the 5'-leader sequence and broadening the substrate specificity of the ribozyme. The polypeptide is Ribonuclease P protein component (Mesoplasma florum (strain ATCC 33453 / NBRC 100688 / NCTC 11704 / L1) (Acholeplasma florum)).